Here is a 330-residue protein sequence, read N- to C-terminus: MRSSTHIFVSFVVYCGVFVTSAIALSNHTNAYQCDRWSNVLNELQANLFHEGQCRSAALRASGTFGGGGADGSIIQFAHTELAYPANEGLEEMVYTLKHFADGHEVSYGDMIQFAGAVALSNCPGSPRLRFYAGRPEAIAPSPPNLLPLPTDPVEKILSRMADAGFNAGDTVALLAAHSIAVQNTIDPSIPDSPLDSTPRIFDTQFYLETLLRGTRYPGKGRGPAQSKSPIEHEFRLASDAAIARHTSTACEWQSFIDNQEGLRSAFRNAMVKLANQGHDNLVDCSFVIPVPPPWNLPVEYPSGKSRSDVEQSCSDVPFPTISLNSDVHD.

The N-terminal stretch at 1 to 24 is a signal peptide; sequence MRSSTHIFVSFVVYCGVFVTSAIA. N27 carries an N-linked (GlcNAc...) asparagine glycan. Intrachain disulfides connect C34-C285, C54-C123, and C251-C314. The Ca(2+) site is built by G69, D71, and S73. Position 178 (H178) interacts with heme b. The Ca(2+) site is built by S179, D196, T198, and D203.

The protein belongs to the peroxidase family. Ligninase subfamily. Ca(2+) serves as cofactor. It depends on heme b as a cofactor.

It localises to the secreted. It carries out the reaction 2 a phenolic donor + H2O2 = 2 a phenolic radical donor + 2 H2O. Can oxidize the lignin redox mediator veratryl alcohol to veratryl aldehyde. May be involved in oxidation of lignocellulose substrates. The sequence is that of Low-redox potential peroxidase (LnP) from Taiwanofungus camphoratus (Poroid brown-rot fungus).